Reading from the N-terminus, the 160-residue chain is Large ribosomal subunit protein eL21 (160 aa).

The protein belongs to the eukaryotic ribosomal protein eL21 family.

The sequence is that of Large ribosomal subunit protein eL21 (rpl21) from Dictyostelium discoideum (Social amoeba).